Reading from the N-terminus, the 996-residue chain is GPI ethanolamine phosphate transferase 1 (996 aa).

The Cytoplasmic portion of the chain corresponds to 1–8 (MAAFPRFR). A helical membrane pass occupies residues 9–29 (FLAIAVIFHFAYIFSIFDIYF). At 30 to 463 (VSPIETGMRL…LQTYDWLFLR (434 aa)) the chain is on the lumenal side. Residues Asn47, Asn147, and Asn210 are each glycosylated (N-linked (GlcNAc...) asparagine). The chain crosses the membrane as a helical span at residues 464-484 (ALITIGYLGWIAYALTTVVDL). Over 485–495 (HVLHGRVRPSR) the chain is Cytoplasmic. The chain crosses the membrane as a helical span at residues 496-516 (TLGGGLFFTSVLVALYASLVI). Over 517–518 (SK) the chain is Lumenal. Residues 519-539 (SPLTYYVYAFFPVFFWEEVYA) form a helical membrane-spanning segment. The Cytoplasmic portion of the chain corresponds to 540-560 (HRESLAAGRKELLGHINSGGS). Residues 561 to 581 (VASFVLNSALYVGVIESLALG) form a helical membrane-spanning segment. Residues 582–586 (YIHRE) are Lumenal-facing. The chain crosses the membrane as a helical span at residues 587-607 (ILSVLFVLGSFWPFTHGLSFL). Over 608–612 (KKHGA) the chain is Cytoplasmic. A helical transmembrane segment spans residues 613 to 633 (LSATWFLACIAMSTFTLLPAM). Over 634-637 (KAEN) the chain is Lumenal. Residues 638–658 (VNLITIGGVLMVVIGLLYLIF) traverse the membrane as a helical segment. Residues 659–681 (EDFVLADFSWNAKPTSRNHLSRS) are Cytoplasmic-facing. A helical membrane pass occupies residues 682-702 (LVGIQVGLTVLSIIITRSSAL). Over 703-715 (SLQAKQGLPRGNQ) the chain is Lumenal. A helical transmembrane segment spans residues 716 to 734 (IMGWVTLVASLLMPLAYRL). Residues 735–754 (RPNNHYMHRILVIFLTCAPT) lie on the Cytoplasmic side of the membrane. Residues 755 to 775 (FVILTISYEGLFYLVFSALLV) traverse the membrane as a helical segment. Over 776 to 822 (SWVRLEHAVQKFTSSKAPQTAATKKPTTTTESHLPAPFRPLTLHDAR) the chain is Lumenal. The helical transmembrane segment at 823–843 (VALFFFILLQSAFFSTGNVAS) threads the bilayer. Residues 844-865 (VSSFSLDSVYRLIPIFDPFSQG) are Cytoplasmic-facing. A helical membrane pass occupies residues 866 to 886 (AMLILKLMIPFALISANLGIL). The Lumenal segment spans residues 887-895 (NKRLGVAPS). Residues 896 to 916 (ALFMVVMGISDILTLYFFWVV) form a helical membrane-spanning segment. The Cytoplasmic segment spans residues 917 to 932 (KDEGSWLEIGSTISHF). A helical transmembrane segment spans residues 933–953 (VIASLLCVFVSALEPVSAAFI). The Lumenal portion of the chain corresponds to 954–996 (AGVEVGEESELKEEGKVAEKVVEKVNEAVEGLVSGGDGGGDES).

Belongs to the PIGG/PIGN/PIGO family. PIGN subfamily.

The protein resides in the endoplasmic reticulum membrane. The protein operates within glycolipid biosynthesis; glycosylphosphatidylinositol-anchor biosynthesis. In terms of biological role, ethanolamine phosphate transferase involved in glycosylphosphatidylinositol-anchor biosynthesis. Transfers ethanolamine phosphate to the first alpha-1,4-linked mannose of the glycosylphosphatidylinositol precursor of GPI-anchor. This chain is GPI ethanolamine phosphate transferase 1 (mcd-4), found in Neurospora crassa (strain ATCC 24698 / 74-OR23-1A / CBS 708.71 / DSM 1257 / FGSC 987).